The primary structure comprises 39 residues: Photosystem II reaction center protein J (39 aa).

A helical membrane pass occupies residues L9–F29.

The protein belongs to the PsbJ family. In terms of assembly, PSII is composed of 1 copy each of membrane proteins PsbA, PsbB, PsbC, PsbD, PsbE, PsbF, PsbH, PsbI, PsbJ, PsbK, PsbL, PsbM, PsbT, PsbX, PsbY, PsbZ, Psb30/Ycf12, at least 3 peripheral proteins of the oxygen-evolving complex and a large number of cofactors. It forms dimeric complexes.

It localises to the plastid. The protein resides in the chloroplast thylakoid membrane. Its function is as follows. One of the components of the core complex of photosystem II (PSII). PSII is a light-driven water:plastoquinone oxidoreductase that uses light energy to abstract electrons from H(2)O, generating O(2) and a proton gradient subsequently used for ATP formation. It consists of a core antenna complex that captures photons, and an electron transfer chain that converts photonic excitation into a charge separation. The chain is Photosystem II reaction center protein J from Emiliania huxleyi (Coccolithophore).